An 87-amino-acid chain; its full sequence is Small ribosomal subunit protein uS15 (87 aa).

This sequence belongs to the universal ribosomal protein uS15 family. In terms of assembly, part of the 30S ribosomal subunit. Forms a bridge to the 50S subunit in the 70S ribosome, contacting the 23S rRNA.

In terms of biological role, one of the primary rRNA binding proteins, it binds directly to 16S rRNA where it helps nucleate assembly of the platform of the 30S subunit by binding and bridging several RNA helices of the 16S rRNA. Its function is as follows. Forms an intersubunit bridge (bridge B4) with the 23S rRNA of the 50S subunit in the ribosome. This Clostridium botulinum (strain Eklund 17B / Type B) protein is Small ribosomal subunit protein uS15.